Here is a 216-residue protein sequence, read N- to C-terminus: Uracil phosphoribosyltransferase (216 aa).

5-phospho-alpha-D-ribose 1-diphosphate contacts are provided by residues arginine 85, arginine 110, and 135 to 143; that span reads DPMVATGYS. Uracil contacts are provided by residues isoleucine 200 and 205–207; that span reads GDA. Residue aspartate 206 coordinates 5-phospho-alpha-D-ribose 1-diphosphate.

The protein belongs to the UPRTase family. It depends on Mg(2+) as a cofactor.

It carries out the reaction UMP + diphosphate = 5-phospho-alpha-D-ribose 1-diphosphate + uracil. The protein operates within pyrimidine metabolism; UMP biosynthesis via salvage pathway; UMP from uracil: step 1/1. Its activity is regulated as follows. Allosterically activated by GTP. In terms of biological role, catalyzes the conversion of uracil and 5-phospho-alpha-D-ribose 1-diphosphate (PRPP) to UMP and diphosphate. This is Uracil phosphoribosyltransferase from Burkholderia ambifaria (strain ATCC BAA-244 / DSM 16087 / CCUG 44356 / LMG 19182 / AMMD) (Burkholderia cepacia (strain AMMD)).